A 534-amino-acid chain; its full sequence is NEDD8-activating enzyme E1 regulatory subunit (534 aa).

Ala2 carries the post-translational modification N-acetylalanine. Lys6 and Lys341 each carry N6-acetyllysine. The tract at residues 331–344 is interaction with UBA3; the sequence is DMIADSGKYIKLQN.

It belongs to the ubiquitin-activating E1 family. ULA1 subfamily. In terms of assembly, heterodimer of UBA3 and NAE1. The complex binds NEDD8 and UBE2M. Binds APP and TP53BP2. Post-translationally, ubiquitinated by TRIP12, leading to its degradation by the proteasome. Ubiquitous in fetal tissues. Expressed throughout the adult brain.

The protein resides in the cell membrane. It participates in protein modification; protein neddylation. Its activity is regulated as follows. Binding of TP53BP2 to the regulatory subunit NAE1 decreases neddylation activity. Functionally, regulatory subunit of the dimeric UBA3-NAE1 E1 enzyme. E1 activates NEDD8 by first adenylating its C-terminal glycine residue with ATP, thereafter linking this residue to the side chain of the catalytic cysteine, yielding a NEDD8-UBA3 thioester and free AMP. E1 finally transfers NEDD8 to the catalytic cysteine of UBE2M. Necessary for cell cycle progression through the S-M checkpoint. Overexpression of NAE1 causes apoptosis through deregulation of NEDD8 conjugation. The covalent attachment of NEDD8 to target proteins is known as 'neddylation' and the process is involved in the regulation of cell growth, viability and development. The chain is NEDD8-activating enzyme E1 regulatory subunit (NAE1) from Homo sapiens (Human).